Consider the following 149-residue polypeptide: Transcription factor HY5-like (149 aa).

The interval 1–77 (MSLQRPNGNS…RRRGRNPVDK (77 aa)) is disordered. The interval 23–36 (ESDEELLMVPDMEA) is interaction with COP1. The residue at position 24 (Ser24) is a Phosphoserine. Positions 55–64 (ELDQTQNGVS) are enriched in polar residues. Residues 78–141 (EYRSLKRLLR…TMLRKMLINT (64 aa)) form the bZIP domain. The interval 80–100 (RSLKRLLRNRVSAQQARERKK) is basic motif. Positions 106 to 134 (LESRANELQNNNDQLEEKISTLTNENTML) are leucine-zipper.

The protein belongs to the bZIP family. Heterodimer; heterodimerizes with HY5 via the leucine-zipper domains. Interacts with COP1 WD40 domain. Interacts with BBX24/STO and BBX25/STH. Ubiquitinated by COP1. Ubiquitination takes place in darkness and leads to its subsequent degradation, thereby preventing the activation of photomorphogenesis signals.

It localises to the nucleus. Its function is as follows. Transcription factor that promotes photomorphogenesis in light. Acts downstream of the light receptor network and directly affects transcription of light-induced genes. Specifically involved in the blue light specific pathway, suggesting that it participates in transmission of cryptochromes (CRY1 and CRY2) signals to downstream responses. In darkness, its degradation prevents the activation of light-induced genes. This Arabidopsis thaliana (Mouse-ear cress) protein is Transcription factor HY5-like (HYH).